The following is a 333-amino-acid chain: MATHTFSCIDGHTCGNPVRLVSGGGPRLEGANMLEKRAHFLKEFDWIRTGLMFEPRGHDMMSGSILYPPTRPDCDVAVLFIETSGCLPMCGHGTIGTITMGIENGLITPREPGKLSIDAPAGKVDITYRQEGRFVEEVRLTNVPSFLYAEGLAAEVEGLGEIVVDVAYGGNFYAIVEPQKNFRDMADHTAGELVGWSPKLRAALNAKYEFVHPEHPEIRGLSHIQWTGKPTQPEAHARNAVFYGEKAIDRSPCGTGTSARIAQLAAKGKLKVGDEFVHESIIGSLFKGRVEAAAKVADRDAIIPSIAGWARMTGINTIFIDDRDPFAHGFVVR.

Residue Cys90 is the Proton acceptor of the active site. Substrate-binding positions include Gly91–His92, His223, and Asp249. The active-site Proton donor is Cys253. A substrate-binding site is contributed by Gly254–Thr255.

This sequence belongs to the proline racemase family.

It catalyses the reaction trans-4-hydroxy-L-proline = cis-4-hydroxy-D-proline. In terms of biological role, likely catalyzes the epimerization of trans-4-hydroxy-L-proline (t4LHyp) to cis-4-hydroxy-D-proline (c4DHyp). May be involved in the degradation pathway that converts t4LHyp to alpha-ketoglutarate, which would allow R.meliloti to grow on t4LHyp as a sole carbon source. This is Probable 4-hydroxyproline 2-epimerase from Rhizobium meliloti (strain 1021) (Ensifer meliloti).